Consider the following 760-residue polypeptide: Acetyl-CoA decarbonylase/synthase complex subunit alpha 1 (760 aa).

The [4Fe-4S] cluster site is built by cysteine 56, cysteine 59, cysteine 60, cysteine 62, cysteine 67, and cysteine 77. Histidine 100 contacts CO. Residues histidine 231, cysteine 259, and cysteine 298 each contribute to the [Ni-4Fe-4S] cluster site. 4Fe-4S ferredoxin-type domains are found at residues 381-410 (KKLQKEAKRCLGCGDCERVCPNDLPIVEAM) and 418-450 (FEGLADLFDRCVGCARCESECPTKLRVMNMIED). Residues cysteine 390, cysteine 393, cysteine 396, cysteine 400, cysteine 428, cysteine 431, cysteine 434, and cysteine 438 each contribute to the [4Fe-4S] cluster site. [Ni-4Fe-4S] cluster is bound by residues cysteine 496, cysteine 525, and cysteine 560.

Belongs to the Ni-containing carbon monoxide dehydrogenase family. In terms of assembly, heterotetramer of two alpha and two epsilon subunits. The ACDS complex is made up of alpha, epsilon, beta, gamma and delta subunits with a probable stoichiometry of (alpha(2)epsilon(2))(4)-beta(8)-(gamma(1)delta(1))(8). Requires [4Fe-4S] cluster as cofactor. [Ni-4Fe-4S] cluster serves as cofactor.

The enzyme catalyses CO + 2 oxidized [2Fe-2S]-[ferredoxin] + H2O = 2 reduced [2Fe-2S]-[ferredoxin] + CO2 + 2 H(+). In terms of biological role, part of the ACDS complex that catalyzes the reversible cleavage of acetyl-CoA, allowing autotrophic growth from CO(2). The alpha-epsilon subcomponent functions as a carbon monoxide dehydrogenase. This Methanopyrus kandleri (strain AV19 / DSM 6324 / JCM 9639 / NBRC 100938) protein is Acetyl-CoA decarbonylase/synthase complex subunit alpha 1.